The chain runs to 239 residues: Tetrahydromethanopterin S-methyltransferase subunit A (239 aa).

Residues 1-215 (MADKKAPAAG…EAAMIAKFNS (215 aa)) are Cytoplasmic-facing. His85 lines the 5-hydroxybenzimidazolylcob(I)amide pocket. A helical membrane pass occupies residues 216–238 (GYYNGKIQGIAIGLFLSIVIFSL). Position 239 (Leu239) is a topological domain, extracellular.

This sequence belongs to the MtrA family. As to quaternary structure, the complex is composed of 8 subunits; MtrA, MtrB, MtrC, MtrD, MtrE, MtrF, MtrG and MtrH. The cofactor is 5-hydroxybenzimidazolylcob(I)amide.

The protein resides in the cell membrane. The catalysed reaction is 5-methyl-5,6,7,8-tetrahydromethanopterin + coenzyme M + 2 Na(+)(in) = 5,6,7,8-tetrahydromethanopterin + methyl-coenzyme M + 2 Na(+)(out). It functions in the pathway one-carbon metabolism; methanogenesis from CO(2); methyl-coenzyme M from 5,10-methylene-5,6,7,8-tetrahydromethanopterin: step 2/2. Its function is as follows. Part of a complex that catalyzes the formation of methyl-coenzyme M and tetrahydromethanopterin from coenzyme M and methyl-tetrahydromethanopterin. This is an energy-conserving, sodium-ion translocating step. This is Tetrahydromethanopterin S-methyltransferase subunit A from Methanococcus maripaludis (strain DSM 14266 / JCM 13030 / NBRC 101832 / S2 / LL).